A 330-amino-acid polypeptide reads, in one-letter code: GMP reductase (330 aa).

Cys-180 acts as the Thioimidate intermediate in catalysis. 209 to 232 (LIADGGIRHNGDIAKSVRFGASMV) is an NADP(+) binding site.

Belongs to the IMPDH/GMPR family. GuaC type 2 subfamily.

It carries out the reaction IMP + NH4(+) + NADP(+) = GMP + NADPH + 2 H(+). Catalyzes the irreversible NADPH-dependent deamination of GMP to IMP. It functions in the conversion of nucleobase, nucleoside and nucleotide derivatives of G to A nucleotides, and in maintaining the intracellular balance of A and G nucleotides. This Lactobacillus johnsonii (strain CNCM I-12250 / La1 / NCC 533) protein is GMP reductase.